The primary structure comprises 118 residues: UPF0102 protein Lxx14785 (118 aa).

This sequence belongs to the UPF0102 family.

This is UPF0102 protein Lxx14785 from Leifsonia xyli subsp. xyli (strain CTCB07).